The following is a 420-amino-acid chain: Glucose-1-phosphate adenylyltransferase (420 aa).

Residues Tyr-107, Gly-172, 187 to 188, and Ser-205 each bind alpha-D-glucose 1-phosphate; that span reads EK.

It belongs to the bacterial/plant glucose-1-phosphate adenylyltransferase family. Homotetramer.

The catalysed reaction is alpha-D-glucose 1-phosphate + ATP + H(+) = ADP-alpha-D-glucose + diphosphate. It functions in the pathway glycan biosynthesis; glycogen biosynthesis. Involved in the biosynthesis of ADP-glucose, a building block required for the elongation reactions to produce glycogen. Catalyzes the reaction between ATP and alpha-D-glucose 1-phosphate (G1P) to produce pyrophosphate and ADP-Glc. This chain is Glucose-1-phosphate adenylyltransferase, found in Rhizobium etli (strain ATCC 51251 / DSM 11541 / JCM 21823 / NBRC 15573 / CFN 42).